Consider the following 1435-residue polypeptide: Protein clueless (1435 aa).

The interval 1 to 97 (MALEMDSKNS…KPEGDGDADA (97 aa)) is disordered. The span at 18–35 (AAAATTKTNKAKENNNLA) shows a compositional bias: low complexity. Residues 38–50 (KKNQSQNLVNGNG) are compositionally biased toward polar residues. The segment covering 58-67 (TKKKGKKNRN) has biased composition (basic residues). A Phosphoserine modification is found at Ser-266. Residues 420-662 (RAEDAFSSKL…RTFPPDVNFL (243 aa)) form the Clu domain. 2 stretches are compositionally biased toward basic and acidic residues: residues 719 to 731 (KKPE…EKKQ) and 752 to 762 (PNEKEKDTPVE). Disordered stretches follow at residues 719–762 (KKPE…TPVE) and 952–998 (VSND…SSSS). Residues 959-975 (KKRGGNGGKHNKHKSSK) are compositionally biased toward basic residues. Positions 988–998 (NGGSTTSSSSS) are enriched in low complexity. 3 TPR repeats span residues 1096-1129 (AYNF…LNNV), 1222-1255 (ALID…NLKY), and 1257-1290 (GNKA…EKET). The interval 1407–1435 (EVLAPQDNNKEQAATAQQLTNGDKVAVSS) is disordered. Polar residues predominate over residues 1417-1435 (EQAATAQQLTNGDKVAVSS).

It belongs to the CLU family.

The protein localises to the cytoplasm. MRNA-binding protein involved in proper cytoplasmic distribution of mitochondria. The sequence is that of Protein clueless from Drosophila persimilis (Fruit fly).